A 143-amino-acid chain; its full sequence is Transcriptional regulator MraZ (143 aa).

SpoVT-AbrB domains are found at residues 5–47 (SHAP…PMAE) and 76–119 (AADD…DAQR).

Belongs to the MraZ family. Forms oligomers.

Its subcellular location is the cytoplasm. The protein localises to the nucleoid. The polypeptide is Transcriptional regulator MraZ (Frankia casuarinae (strain DSM 45818 / CECT 9043 / HFP020203 / CcI3)).